The following is a 1310-amino-acid chain: Major viral transcription factor ICP4 homolog (1310 aa).

3 disordered regions span residues 117–271 (AGAR…GPVE), 285–454 (GAKA…TPII), and 636–696 (GSSP…SLLD). Basic and acidic residues predominate over residues 341–350 (PVEKKPKSRE). 3 stretches are compositionally biased toward low complexity: residues 351–364 (FVSS…WGSS), 392–407 (PSPS…DGGS), and 648–666 (PSPT…SAAA). The Nuclear localization signal motif lies at 677–685 (RLRTPRKRK). Phosphoserine; by VZV ORF66 occurs at positions 686 and 722. Disordered stretches follow at residues 1195–1258 (RFVF…SFGV) and 1282–1310 (ELLS…QSRG). The segment covering 1217-1227 (RTADDREHALE) has biased composition (basic and acidic residues). The span at 1228 to 1250 (PDDWEVGCEDAWDSEEGGGDDGD) shows a compositional bias: acidic residues.

This sequence belongs to the herpesviridae ICP4 family. In terms of assembly, interacts with IE4 and IE63. Interacts with human USF1 and SP1. Post-translationally, phosphorylated by ORF66 protein kinase on Ser-686 and Ser-722. Also phosphorylated by ORF47 protein kinase and by human CSNK2A1/CKII.

It is found in the host nucleus. The protein localises to the host cytoplasm. Its subcellular location is the virion tegument. In terms of biological role, transcriptional transactivator. May interact with and recruit specific components of the general transcription machinery to viral promoters and stabilize their formation for transcription initiation. Negatively regulates its own transcription. This immediate early (EI) protein may be necessary in virion for viral pathogenesis. This is Major viral transcription factor ICP4 homolog from Homo sapiens (Human).